We begin with the raw amino-acid sequence, 335 residues long: Adenosine deaminase (335 aa).

The Zn(2+) site is built by H12 and H14. Substrate contacts are provided by H14 and D16. H197 provides a ligand contact to Zn(2+). The active-site Proton donor is E200. Residue D278 coordinates Zn(2+).

This sequence belongs to the metallo-dependent hydrolases superfamily. Adenosine and AMP deaminases family. Adenosine deaminase subfamily. The cofactor is Zn(2+).

The enzyme catalyses adenosine + H2O + H(+) = inosine + NH4(+). It carries out the reaction 2'-deoxyadenosine + H2O + H(+) = 2'-deoxyinosine + NH4(+). Functionally, catalyzes the hydrolytic deamination of adenosine and 2-deoxyadenosine. This chain is Adenosine deaminase, found in Clostridium botulinum (strain Loch Maree / Type A3).